A 194-amino-acid polypeptide reads, in one-letter code: ATP-dependent Clp protease proteolytic subunit (194 aa).

The active-site Nucleophile is Ser-97. The active site involves His-122.

This sequence belongs to the peptidase S14 family. Fourteen ClpP subunits assemble into 2 heptameric rings which stack back to back to give a disk-like structure with a central cavity, resembling the structure of eukaryotic proteasomes.

The protein resides in the cytoplasm. The enzyme catalyses Hydrolysis of proteins to small peptides in the presence of ATP and magnesium. alpha-casein is the usual test substrate. In the absence of ATP, only oligopeptides shorter than five residues are hydrolyzed (such as succinyl-Leu-Tyr-|-NHMec, and Leu-Tyr-Leu-|-Tyr-Trp, in which cleavage of the -Tyr-|-Leu- and -Tyr-|-Trp bonds also occurs).. In terms of biological role, cleaves peptides in various proteins in a process that requires ATP hydrolysis. Has a chymotrypsin-like activity. Plays a major role in the degradation of misfolded proteins. This Carsonella ruddii (strain PV) protein is ATP-dependent Clp protease proteolytic subunit.